The chain runs to 493 residues: Flagellin (493 aa).

Belongs to the bacterial flagellin family.

The protein resides in the secreted. The protein localises to the bacterial flagellum. In terms of biological role, flagellin is the subunit protein which polymerizes to form the filaments of bacterial flagella. This is Flagellin (fliC) from Salmonella rubislaw.